Here is an 83-residue protein sequence, read N- to C-terminus: MAGPWTLEPGKNYGGIPTWAWPRSTTVHVQVVGGGNGRVRFQAGASPDEDNDVNGETSFSRSFGGFRLNVTNIGSTTLKVWTA.

This is an uncharacterized protein from Dictyostelium discoideum (Social amoeba).